A 1333-amino-acid polypeptide reads, in one-letter code: Aldehyde oxidase 1 (1333 aa).

One can recognise a 2Fe-2S ferredoxin-type domain in the interval 4 to 91 (PQLLFYVNGQ…GTAVTTVEGI (88 aa)). Cys43, Cys48, Cys51, and Cys73 together coordinate [2Fe-2S] cluster. Gln112 lines the Mo-molybdopterin pocket. [2Fe-2S] cluster is bound by residues Cys113, Cys116, Cys148, and Cys150. Cys150 is a binding site for Mo-molybdopterin. Positions 235–420 (FYSNRMTWIS…VSVNIPCSRK (186 aa)) constitute an FAD-binding PCMH-type domain. FAD is bound by residues 263–270 (IVMGYTSV), Ala344, Ser353, His357, Asp366, and Leu410. Residues 801 to 802 (AF) and Met1042 contribute to the Mo-molybdopterin site. Ser1063 carries the post-translational modification Phosphoserine. Mo-molybdopterin-binding positions include 1083–1086 (GSVV), Gln1198, and Leu1263. Glu1265 acts as the Proton acceptor; for azaheterocycle hydroxylase activity in catalysis.

The protein belongs to the xanthine dehydrogenase family. As to quaternary structure, homodimer. [2Fe-2S] cluster is required as a cofactor. The cofactor is FAD. Requires Mo-molybdopterin as cofactor. The N-terminus is blocked. Expression in liver (at protein level). Also detected in heart, lung, spleen and kidney.

It localises to the cytoplasm. The enzyme catalyses an aldehyde + O2 + H2O = a carboxylate + H2O2 + H(+). It carries out the reaction retinal + O2 + H2O = retinoate + H2O2 + H(+). With respect to regulation, inhibited by menadione and isovanillin. Not inhibited by allopurinol, a xanthine dehydrogenase potent inhibitor. Inhibited by the flavonoids quercetin, myricetin and genistein. Nitric oxide generation is inhibited by raloxifene and competitively inhibited by an increase in oxygen levels. Functionally, oxidase with broad substrate specificity, oxidizing aromatic azaheterocycles, such as N1-methylnicotinamide, N-methylphthalazinium and phthalazine, as well as aldehydes, such as benzaldehyde, retinal, pyridoxal, and vanillin. Plays a role in the metabolism of xenobiotics and drugs containing aromatic azaheterocyclic substituents. Participates in the bioactivation of prodrugs such as famciclovir, catalyzing the oxidation step from 6-deoxypenciclovir to penciclovir, which is a potent antiviral agent. Is probably involved in the regulation of reactive oxygen species homeostasis. Is a prominent source of superoxide generation via the one-electron reduction of molecular oxygen. Also catalyzes nitric oxide (NO) production; under anaerobic conditions, reduces nitrite to NO with NADH or aldehyde as electron donor, but under aerobic conditions, NADH is the preferred substrate. These reactions may be catalyzed by several isozymes. May play a role in adipogenesis. This chain is Aldehyde oxidase 1, found in Rattus norvegicus (Rat).